Here is a 288-residue protein sequence, read N- to C-terminus: Homoserine kinase (288 aa).

Residue 78-88 (PLARGLGSSSS) coordinates ATP.

It belongs to the GHMP kinase family. Homoserine kinase subfamily.

Its subcellular location is the cytoplasm. The catalysed reaction is L-homoserine + ATP = O-phospho-L-homoserine + ADP + H(+). Its pathway is amino-acid biosynthesis; L-threonine biosynthesis; L-threonine from L-aspartate: step 4/5. Its function is as follows. Catalyzes the ATP-dependent phosphorylation of L-homoserine to L-homoserine phosphate. This Streptococcus agalactiae serotype III (strain NEM316) protein is Homoserine kinase.